The sequence spans 257 residues: Acetylglutamate kinase (257 aa).

Substrate-binding positions include 43–44 (GG), arginine 65, and asparagine 157.

This sequence belongs to the acetylglutamate kinase family. ArgB subfamily.

The protein localises to the cytoplasm. It carries out the reaction N-acetyl-L-glutamate + ATP = N-acetyl-L-glutamyl 5-phosphate + ADP. Its pathway is amino-acid biosynthesis; L-arginine biosynthesis; N(2)-acetyl-L-ornithine from L-glutamate: step 2/4. Catalyzes the ATP-dependent phosphorylation of N-acetyl-L-glutamate. The protein is Acetylglutamate kinase of Actinobacillus succinogenes (strain ATCC 55618 / DSM 22257 / CCUG 43843 / 130Z).